The primary structure comprises 707 residues: Ornithine decarboxylase (707 aa).

A disordered region spans residues 83-102 (NRNPLSRADSAAGREETAQT). The residue at position 288 (Lys288) is an N6-(pyridoxal phosphate)lysine. Residues Ser421, Gly458, and 498–501 (EPGR) each bind pyridoxal 5'-phosphate. 561-562 (FD) lines the substrate pocket. Cys634 serves as the catalytic Proton donor; shared with dimeric partner. Asp635 lines the substrate pocket. Tyr663 provides a ligand contact to pyridoxal 5'-phosphate.

It belongs to the Orn/Lys/Arg decarboxylase class-II family. In terms of assembly, homodimer. Only the dimer is catalytically active, as the active sites are constructed of residues from both monomers. Requires pyridoxal 5'-phosphate as cofactor.

It carries out the reaction L-ornithine + H(+) = putrescine + CO2. It functions in the pathway amine and polyamine biosynthesis; putrescine biosynthesis via L-ornithine pathway; putrescine from L-ornithine: step 1/1. With respect to regulation, inhibited by antizyme (AZ) in response to polyamine levels. AZ inhibits the assembly of the functional homodimer by binding to ODC monomers and targeting them for ubiquitin-independent proteolytic destruction by the 26S proteasome. Inhibited by 1-amino-oxy-3-aminopropane (APA, an isosteric analog of putrescine). Irreversibly inhibited by alpha-difluoromethylornithine (DFMO, a curative agent of West African sleeping sickness). Catalyzes the first and rate-limiting step of polyamine biosynthesis that converts ornithine into putrescine, which is the precursor for the polyamines, spermidine and spermine. Polyamines are essential for cell proliferation and are implicated in cellular processes, ranging from DNA replication to apoptosis. This is Ornithine decarboxylase from Leishmania donovani.